The following is a 304-amino-acid chain: tRNA dimethylallyltransferase (304 aa).

Position 10-17 (G10–T17) interacts with ATP. T12–T17 serves as a coordination point for substrate. 3 interaction with substrate tRNA regions span residues D35–L38, Q159–R163, and R240–R245.

It belongs to the IPP transferase family. In terms of assembly, monomer. The cofactor is Mg(2+).

The enzyme catalyses adenosine(37) in tRNA + dimethylallyl diphosphate = N(6)-dimethylallyladenosine(37) in tRNA + diphosphate. Functionally, catalyzes the transfer of a dimethylallyl group onto the adenine at position 37 in tRNAs that read codons beginning with uridine, leading to the formation of N6-(dimethylallyl)adenosine (i(6)A). The chain is tRNA dimethylallyltransferase from Shewanella putrefaciens (strain CN-32 / ATCC BAA-453).